The following is an 806-amino-acid chain: U3 small nucleolar RNA-associated protein 17 (806 aa).

WD repeat units follow at residues 266–305 (WHAN…RQFL), 448–489 (RNGL…KTWV), 499–538 (GNLE…SAWK), and 598–635 (PHGG…VQWT).

In terms of assembly, component of the ribosomal small subunit (SSU) processome.

It localises to the nucleus. It is found in the nucleolus. In terms of biological role, involved in nucleolar processing of pre-18S ribosomal RNA. Required for optimal pre-ribosomal RNA transcription by RNA polymerase I together with a subset of U3 proteins required for transcription (t-UTPs). This is U3 small nucleolar RNA-associated protein 17 (utp17) from Schizosaccharomyces pombe (strain 972 / ATCC 24843) (Fission yeast).